The sequence spans 882 residues: MDARYNPQAIESKWQAHWREIGLDRTPELKDGSRKFYALSMFPYPSGNLHMGHVRNYTITDVIARHKRMQGYAVLHPMGWDAFGLPAENAAIDRGIPPAKWTYQNIAQMREQLQRLGLSYDWEREITTCAPDYYKWTQWLFLQFFKAGLAYQKEAPVNWDPVDQTVLANEQVDAEGRSWRSGALVEKRMLKQWFFKITAYADQLLADLEKLSGWPERVRTMQENWIGQSVGAKVIFKTEAGDELAVFTTRPDTLWGATFMVMSPEHPLVDKLTTAEQLQAVRAYQAQAAARSEIERSAEDREKTGVWTGSYAINPVNQERIPIWIADYVLMGYGTGAIMAVPAHDQRDFEFARKFGLPIKRVVQPPEGSLSSTDRASGTESSELQAAWTGEGVMINSGPLDGIPVGKGPGQSVERAIAWLEAQGLGEKQINYRLRDWLISRQRYWGCPIPVIHCPHCGIVPVPEKDLPVLLPEDVELTGRGGSPLAQLEDWVKVKCPTCGAEARRETDTMDTFICSSWYFLRFSDARNDREIFRKDRVNAWLPVDQYVGGIEHAILHLLYSRFFTKVLRDRGLLDFDEPFLRLLTQGMVQGRTYYNPNKSGKDRWIPAALVKDPDNPTDPETGEPLEVIYATMSKSKGNGVDPEEVLAHYGADTARMFILFKAPPEKDLEWDDADVEGQFRFLNRVWRQVYEFVVRGGGTESWRGRVSELLPAKVEVGSLTKAEKDLRRAIHTAIKEVSEDLENDYQFNTAIAELMKLSNALGEAGIPDSPVYAEGIRTLVLLMAPFAPHIAEELWQALGGADSVHRQSWPSYDPAALVADTVTIVIQVNGKLRGSFEAPAEVTPEEQEQLALRSEAAQKYLEGATPKKVVVVPKKLVNFVL.

The 'HIGH' region signature appears at 43–53 (PYPSGNLHMGH). The 'KMSKS' region motif lies at 632–636 (TMSKS). Lysine 635 contacts ATP.

It belongs to the class-I aminoacyl-tRNA synthetase family.

The protein localises to the cytoplasm. The enzyme catalyses tRNA(Leu) + L-leucine + ATP = L-leucyl-tRNA(Leu) + AMP + diphosphate. The protein is Leucine--tRNA ligase of Synechococcus sp. (strain JA-2-3B'a(2-13)) (Cyanobacteria bacterium Yellowstone B-Prime).